Here is a 223-residue protein sequence, read N- to C-terminus: Probable cell wall protein PGA61 (223 aa).

Positions 1-16 (MKSGLLLAVILPVAFA) are cleaved as a signal peptide. N-linked (GlcNAc...) asparagine glycosylation is present at Asn25. Residues 83-134 (GAPSSSSTPTSSTETTSSTEAETTEAETTEQPSSSTSSNTESSKTTILETPS) are disordered. Composition is skewed to low complexity over residues 84–103 (APSSSSTPTSSTETTSSTEA) and 111–128 (TEQPSSSTSSNTESSKTT). N-linked (GlcNAc...) asparagine glycosylation is present at Asn188. The GPI-anchor amidated asparagine moiety is linked to residue Asn202. Positions 203 to 223 (GAGRAAVIGSGSLLALLLNFI) are cleaved as a propeptide — removed in mature form.

This sequence belongs to the IHD1 family. Post-translationally, the GPI-anchor is attached to the protein in the endoplasmic reticulum and serves to target the protein to the cell surface. There, the glucosamine-inositol phospholipid moiety is cleaved off and the GPI-modified mannoprotein is covalently attached via its lipidless GPI glycan remnant to the 1,6-beta-glucan of the outer cell wall layer.

The protein resides in the secreted. Its subcellular location is the cell wall. It is found in the membrane. Functionally, probable GPI-anchored cell wall protein that may be involved in cell wall organization, hyphal growth, as well as in virulence. In Candida albicans (strain SC5314 / ATCC MYA-2876) (Yeast), this protein is Probable cell wall protein PGA61 (PGA61).